A 153-amino-acid polypeptide reads, in one-letter code: Salivary C-type lectin 1 (153 aa).

The signal sequence occupies residues 1 to 19 (MIFSLYLIVAISLADLTAA). The region spanning 26 to 151 (KNRFCFPNVV…CSSTRRFVCE (126 aa)) is the C-type lectin domain. 2 disulfides stabilise this stretch: Cys-45-Cys-150 and Cys-122-Cys-142.

Ca(2+) is required as a cofactor. Expressed in female salivary gland. Not detected or low-level expression in female midgut and fat body.

The protein localises to the secreted. In terms of biological role, salivary protein with carbohydrate-binding activity; exibits high affinity for D-mannose. Agglutinates host erythrocytes. Probably participates in mosquito innate immune responses to prevent microorganism multiplication in sugar and blood meals. Its function is as follows. (Microbial infection) Agglutinates Staphylococcus aureus in vitro. Functionally, (Microbial infection) Agglutinates Candida albicans in vitro. (Microbial infection) Does not agglutinate Escherichia coli in vitro. This is Salivary C-type lectin 1 from Aedes albopictus (Asian tiger mosquito).